The following is a 453-amino-acid chain: CBL-interacting protein kinase 24 (453 aa).

One can recognise a Protein kinase domain in the interval Tyr18–Phe271. ATP is bound by residues Ile24–Val32 and Lys47. Asp141 serves as the catalytic Proton acceptor. The activation loop stretch occupies residues Asp159–Glu186. The region spanning Asn310–Asp336 is the NAF domain. Residues Lys343–Val372 are PPI.

Belongs to the protein kinase superfamily. CAMK Ser/Thr protein kinase family. SNF1 subfamily. As to quaternary structure, interacts with CBL4. The cofactor is Mn(2+).

The catalysed reaction is L-seryl-[protein] + ATP = O-phospho-L-seryl-[protein] + ADP + H(+). The enzyme catalyses L-threonyl-[protein] + ATP = O-phospho-L-threonyl-[protein] + ADP + H(+). In terms of biological role, involved in the regulatory pathway for the control of intracellular Na(+) and K(+) homeostasis and salt tolerance. Operates in synergy with CBL4 to activate the plasma membrane Na(+)/H(+) antiporter SOS1. CIPK serine-threonine protein kinases interact with CBL proteins. Binding of a CBL protein to the regulatory NAF domain of CIPK protein lead to the activation of the kinase in a calcium-dependent manner. This chain is CBL-interacting protein kinase 24 (CIPK24), found in Oryza sativa subsp. japonica (Rice).